We begin with the raw amino-acid sequence, 75 residues long: Small ribosomal subunit protein bS16 (75 aa).

Belongs to the bacterial ribosomal protein bS16 family.

This chain is Small ribosomal subunit protein bS16, found in Nitratiruptor sp. (strain SB155-2).